A 135-amino-acid polypeptide reads, in one-letter code: MPTINQLVRKGREKVEKKSKAPALQGNPQKRGVCVRVYTTTPKKPNSALRKVARVRLSNGYEVTCYIPGIGHNLQEHSIVLVRGGRVKDLPGVRYKIIRGALDAAGVKDRKQSRSKYGAKRPKPGQAAATTGKKK.

The segment at 1–29 (MPTINQLVRKGREKVEKKSKAPALQGNPQ) is disordered. A 3-methylthioaspartic acid modification is found at Asp89. Residues 106–135 (GVKDRKQSRSKYGAKRPKPGQAAATTGKKK) are disordered. Residues 113–123 (SRSKYGAKRPK) are compositionally biased toward basic residues.

It belongs to the universal ribosomal protein uS12 family. As to quaternary structure, part of the 30S ribosomal subunit. Contacts proteins S8 and S17. May interact with IF1 in the 30S initiation complex.

Functionally, with S4 and S5 plays an important role in translational accuracy. Interacts with and stabilizes bases of the 16S rRNA that are involved in tRNA selection in the A site and with the mRNA backbone. Located at the interface of the 30S and 50S subunits, it traverses the body of the 30S subunit contacting proteins on the other side and probably holding the rRNA structure together. The combined cluster of proteins S8, S12 and S17 appears to hold together the shoulder and platform of the 30S subunit. The protein is Small ribosomal subunit protein uS12 of Sulfurihydrogenibium sp. (strain YO3AOP1).